The chain runs to 232 residues: MAYVALSDKPHLSGEVGEEACSSWNPPLFSPRPLPRLWPLPGTPFLPIRALPFSASSSGKSSLVPSPSSSAHSGFRTPCLGPDCLLCTQGCELHEGRNHMAVHSCVARAWPGDPQEVRHLNPLLCDPGSQVEPSWPWHPGLEQAAASWVGNHVSPAHRQALRGHSLGSALRALMPGGHCPLCVPCKRGCNLRGGRGKHGPRPCCPLLRKFPVLPVHPWPFPCAVWDSGWSCR.

This is an uncharacterized protein from Homo sapiens (Human).